A 145-amino-acid polypeptide reads, in one-letter code: Peptide methionine sulfoxide reductase MsrB (145 aa).

One can recognise a MsrB domain in the interval 4-127 (SDELKQRIGE…NSAALKFIPY (124 aa)). Cys-116 (nucleophile) is an active-site residue.

It belongs to the MsrB Met sulfoxide reductase family.

It carries out the reaction L-methionyl-[protein] + [thioredoxin]-disulfide + H2O = L-methionyl-(R)-S-oxide-[protein] + [thioredoxin]-dithiol. This is Peptide methionine sulfoxide reductase MsrB from Streptococcus pyogenes serotype M3 (strain ATCC BAA-595 / MGAS315).